Here is a 633-residue protein sequence, read N- to C-terminus: Phospholipid--sterol O-acyltransferase (633 aa).

Residues 1-6 lie on the Cytoplasmic side of the membrane; the sequence is MGANSK. Residues 7–29 traverse the membrane as a helical; Signal-anchor for type II membrane protein segment; the sequence is SVTASFTVIAVFFLICGGRTAVE. The Lumenal segment spans residues 30–633; the sequence is DETEFHGDYS…TSANMLLQYI (604 aa). S195 functions as the Acyl-ester intermediate in the catalytic mechanism. Residues D461 and H505 each act as charge relay system in the active site.

This sequence belongs to the AB hydrolase superfamily. Lipase family.

The protein resides in the microsome membrane. In terms of biological role, involved in lipid catabolism. Essential for sterol esters biosynthesis in leaves and seeds, but not in flowers. Plays a role in controlling the free sterol content of leaves. Catalyzes the transacylation of acyl groups from phospholipids to a variety of different sterols. Prefers phosphatidylethanolamine over phosphatidylcholine as an acyl donor. Not active toward neutral lipids. Highly specific for position sn-2, which in plant lipids is essentially devoid of saturated acyl groups. Broad sterol specificity (cholesterol &gt; campesterol &gt; sitosterol &gt; stigmasterol), but no activity with lupeol or beta-amyrin. The sequence is that of Phospholipid--sterol O-acyltransferase (PSAT) from Arabidopsis thaliana (Mouse-ear cress).